Reading from the N-terminus, the 190-residue chain is MKFLFDLFPVILFFAAFKVAGIYVATTVAMVATVLQIAWVWFKHRKVDAMQWLSLLIIGVFGGATLIFHNETFIKWKPTVLYWLFGVVLLGSVVVVRKNLIRAMMEQQVSLPETMWGRLNLVWALFFLVMGCLNLYVAYNFDTDVWVNFKLFGSMGLMVVFILAQSVWLARHMQERPANAANDANIGDDR.

Transmembrane regions (helical) follow at residues 3 to 23 (FLFD…AGIY), 24 to 44 (VATT…WFKH), 49 to 69 (AMQW…LIFH), 76 to 96 (WKPT…VVVV), 121 to 141 (LVWA…AYNF), and 149 to 169 (FKLF…SVWL).

Belongs to the YciB family.

It is found in the cell inner membrane. Functionally, plays a role in cell envelope biogenesis, maintenance of cell envelope integrity and membrane homeostasis. The protein is Inner membrane-spanning protein YciB of Ralstonia pickettii (strain 12J).